A 176-amino-acid polypeptide reads, in one-letter code: Retinol-binding protein 4-A (176 aa).

Ser-1 is subject to N-acetylserine. 3 cysteine pairs are disulfide-bonded: Cys-3-Cys-159, Cys-69-Cys-173, and Cys-119-Cys-128. Residue Gln-97 participates in substrate binding.

It belongs to the calycin superfamily. Lipocalin family.

The protein localises to the secreted. Functionally, RBP delivers retinol from the liver stores to the peripheral tissues. In plasma, the RBP-retinol complex interacts with transthyretin, this prevents its loss by filtration through the kidney glomeruli. This Oncorhynchus mykiss (Rainbow trout) protein is Retinol-binding protein 4-A (rbp4a).